The chain runs to 216 residues: Probable GTP-binding protein EngB (216 aa).

An EngB-type G domain is found at 24 to 205 (ATPEIAFVGR…WARLAALAAE (182 aa)). Residues 32–39 (GRSNVGKS), 59–63 (GRTRA), 86–89 (DLPG), 153–156 (TKTD), and 184–186 (FSA) each bind GTP. Residues Ser39 and Thr61 each contribute to the Mg(2+) site.

Belongs to the TRAFAC class TrmE-Era-EngA-EngB-Septin-like GTPase superfamily. EngB GTPase family. The cofactor is Mg(2+).

Its function is as follows. Necessary for normal cell division and for the maintenance of normal septation. The sequence is that of Probable GTP-binding protein EngB from Anaeromyxobacter dehalogenans (strain 2CP-1 / ATCC BAA-258).